A 133-amino-acid chain; its full sequence is Profilin-4 (133 aa).

Residues Cys13 and Cys117 are joined by a disulfide bond. Positions 83 to 99 (AVIRGKKGSGGITIKKT) match the Involved in PIP2 interaction motif. Position 113 is a phosphothreonine (Thr113).

Belongs to the profilin family. As to quaternary structure, occurs in many kinds of cells as a complex with monomeric actin in a 1:1 ratio. In terms of processing, phosphorylated by MAP kinases.

It localises to the cytoplasm. The protein resides in the cytoskeleton. Functionally, binds to actin and affects the structure of the cytoskeleton. At high concentrations, profilin prevents the polymerization of actin, whereas it enhances it at low concentrations. The chain is Profilin-4 from Corylus avellana (European hazel).